Here is a 947-residue protein sequence, read N- to C-terminus: Serine-aspartate repeat-containing protein C (947 aa).

The signal sequence occupies residues 1–50 (MNNKKTATNRKGMIPNRLNKFSIRKYSVGTASILVGTTLIFGLSGHEAKA). The segment at 51-164 (AEHTNGELNQ…STTPKTTTIK (114 aa)) is disordered. Positions 51-495 (AEHTNGELNQ…GSSTANGDQK (445 aa)) are ligand binding A region. Residues 56 to 71 (GELNQSKNETTAPSEN) show a composition bias toward polar residues. The span at 72–83 (KTTKKVDSRQLK) shows a compositional bias: basic and acidic residues. Positions 84–155 (DNTQTATADQ…SNLTQAKDVS (72 aa)) are enriched in polar residues. 2 CNA-B domains span residues 496 to 606 (KYNL…YKTP) and 607 to 717 (KYSL…EEET). The interval 678 to 927 (TQTGTNTTED…NNSNNGTLFG (250 aa)) is disordered. Acidic residues-rich tracts occupy residues 685 to 695 (TEDDKDADGGE) and 712 to 886 (YYEE…DSDS). The LPXTG sorting signal signature appears at 910-914 (LPETG). Residues 912 to 927 (ETGSENNNSNNGTLFG) show a composition bias toward low complexity. A Pentaglycyl murein peptidoglycan amidated threonine modification is found at threonine 913. A propeptide spans 914–947 (GSENNNSNNGTLFGGLFAALGSLLLFGRRKKQNK) (removed by sortase).

It belongs to the serine-aspartate repeat-containing protein (SDr) family. Homodimerizes; via N2-Domain. Interacts with host NRXN1; this interaction mediates bacterial attachment to host cells.

It localises to the secreted. The protein resides in the cell wall. Its function is as follows. Cell surface-associated calcium-binding protein which plays an important role in adhesion and pathogenesis. Mediates interactions with components of the extracellular matrix such as host NRXN1 to promote bacterial adhesion. In Staphylococcus aureus (strain USA300), this protein is Serine-aspartate repeat-containing protein C (sdrC).